The following is a 1388-amino-acid chain: Kinesin-like protein KIF15-A (1388 aa).

In terms of domain architecture, Kinesin motor spans 26 to 364 (AIKVFVRIRP…LQFAQRAKLI (339 aa)). 110–117 (GQTGSGKT) lines the ATP pocket. Positions 369-1383 (VVNEDTQGNV…ENLFLKESKK (1015 aa)) form a coiled coil. The disordered stretch occupies residues 1127–1156 (EQEKIRPASSNSSSPVVLPETPRTPEGNPY). Residues 1139 to 1388 (SSPVVLPETP…KESKKCEHCN (250 aa)) are necessary for its targeting to microtubule minus ends.

Belongs to the TRAFAC class myosin-kinesin ATPase superfamily. Kinesin family. KLP2 subfamily. Homodimer. Dimerization is required for targeting to microtubule minus ends. Found in a complex with tpx2 and microtubules. Its association with microtubules and targeting to microtubule minus ends requires tpx2. Strongly expressed in testis and weakly in lung (at protein level).

It is found in the cytoplasm. It localises to the cytoskeleton. The protein localises to the microtubule organizing center. The protein resides in the centrosome. Its subcellular location is the spindle. It is found in the spindle pole. In terms of biological role, plus-end directed kinesin-like motor enzyme involved in mitotic spindle assembly. Required for centrosome separation and maintenance of spindle bipolarity during mitosis. This Xenopus laevis (African clawed frog) protein is Kinesin-like protein KIF15-A (kif15-a).